The following is a 199-amino-acid chain: NAD(P)H dehydrogenase (quinone) (199 aa).

Residues 4–190 form the Flavodoxin-like domain; the sequence is ILVLYYSMYG…AIARFQGEHV (187 aa). FMN contacts are provided by residues 10–15 and 79–81; these read SMYGHI and TRF. Tyr-12 contributes to the NAD(+) binding site. Trp-99 serves as a coordination point for substrate. FMN-binding positions include 114–119 and His-134; that span reads STGTGG.

The protein belongs to the WrbA family. FMN serves as cofactor.

It catalyses the reaction a quinone + NADH + H(+) = a quinol + NAD(+). The enzyme catalyses a quinone + NADPH + H(+) = a quinol + NADP(+). This chain is NAD(P)H dehydrogenase (quinone), found in Yersinia pseudotuberculosis serotype O:1b (strain IP 31758).